The sequence spans 97 residues: Large ribosomal subunit protein uL23 (97 aa).

The protein belongs to the universal ribosomal protein uL23 family. Part of the 50S ribosomal subunit. Contacts protein L29, and trigger factor when it is bound to the ribosome.

Its function is as follows. One of the early assembly proteins it binds 23S rRNA. One of the proteins that surrounds the polypeptide exit tunnel on the outside of the ribosome. Forms the main docking site for trigger factor binding to the ribosome. The chain is Large ribosomal subunit protein uL23 from Anaeromyxobacter dehalogenans (strain 2CP-1 / ATCC BAA-258).